The chain runs to 98 residues: NADH-ubiquinone oxidoreductase chain 4L (98 aa).

The next 2 helical transmembrane spans lie at 29–49 (SLLCLEGMMLSMFILSTLLIL) and 61–81 (ILLLVFAACEAAIGLALLVTV).

This sequence belongs to the complex I subunit 4L family. Core subunit of respiratory chain NADH dehydrogenase (Complex I) which is composed of 45 different subunits.

It is found in the mitochondrion inner membrane. It catalyses the reaction a ubiquinone + NADH + 5 H(+)(in) = a ubiquinol + NAD(+) + 4 H(+)(out). In terms of biological role, core subunit of the mitochondrial membrane respiratory chain NADH dehydrogenase (Complex I) which catalyzes electron transfer from NADH through the respiratory chain, using ubiquinone as an electron acceptor. Part of the enzyme membrane arm which is embedded in the lipid bilayer and involved in proton translocation. This Cheirogaleus medius (Fat-tailed dwarf lemur) protein is NADH-ubiquinone oxidoreductase chain 4L (MT-ND4L).